The primary structure comprises 363 residues: Outer membrane porin F (363 aa).

The first 22 residues, 1–22 (MMKRKILAAVIPALLAAATANA), serve as a signal peptide directing secretion. Residues 23 to 28 (AEIYNK) form a beta stranded membrane-spanning segment. Residue Asp-29 is a topological domain, periplasmic. A beta stranded membrane pass occupies residues 30-45 (GNKLDLYGKAVGRHVW). At 46–56 (TTTGDSKNADQ) the chain is on the extracellular side. A beta stranded membrane pass occupies residues 57-69 (TYAQIGFKGETQI). Residues 70–71 (NT) lie on the Periplasmic side of the membrane. Residues 72–84 (DLTGFGQWEYRTK) form a beta stranded membrane-spanning segment. Over 85-99 (ADRAEGEQQNSNLVR) the chain is Extracellular. A beta stranded transmembrane segment spans residues 100–108 (LAFAGLKYA). A topological domain (periplasmic) is located at residue Glu-109. The chain crosses the membrane as a beta stranded span at residues 110–117 (VGSIDYGR). Topologically, residues 118–154 (NYGIVYDVESYTDMAPYFSGETWGGAYTDNYMTSRAG) are extracellular. A beta stranded transmembrane segment spans residues 155–161 (GLLTYRN). Residues 162–169 (SDFFGLVD) are Periplasmic-facing. Residues 170–181 (GLSFGIQYQGKN) traverse the membrane as a beta stranded segment. The Extracellular portion of the chain corresponds to 182-192 (QDNHSINSQNG). A beta stranded transmembrane segment spans residues 193 to 203 (DGVGYTMAYEF). Residue Asp-204 is a topological domain, periplasmic. A beta stranded transmembrane segment spans residues 205 to 217 (GFGVTAAYSNSKR). Topologically, residues 218–230 (TNDQQDRDGNGDR) are extracellular. A beta stranded membrane pass occupies residues 231–242 (AESWAVGAKYDA). A topological domain (periplasmic) is located at residue Asn-243. The chain crosses the membrane as a beta stranded span at residues 244–256 (NVYLAAVYAETRN). At 257-272 (MSIVENTVTDTVEMAN) the chain is on the extracellular side. Residues 273-285 (KTQNLEVVAQYQF) form a beta stranded membrane-spanning segment. Residues 286-287 (DF) lie on the Periplasmic side of the membrane. The chain crosses the membrane as a beta stranded span at residues 288–301 (GLRPAISYVQSKGK). At 302–312 (QLNGADGSADL) the chain is on the extracellular side. Residues 313–324 (AKYIQAGATYYF) form a beta stranded membrane-spanning segment. Topologically, residues 325 to 326 (NK) are periplasmic. A beta stranded membrane pass occupies residues 327-336 (NMNVWVDYRF). The Extracellular portion of the chain corresponds to 337 to 353 (NLLDENDYSSSYVGTDD). A beta stranded membrane pass occupies residues 354–363 (QAAVGITYQF).

The protein belongs to the Gram-negative porin family. Homotrimer. Forms mixed heterotrimers with OmpC and with PhoE; other mixed heterotrimers with other porins are also probable.

Its subcellular location is the cell outer membrane. Forms pores that allow passive diffusion of small molecules across the outer membrane. The protein is Outer membrane porin F (ompF) of Salmonella typhi.